Reading from the N-terminus, the 341-residue chain is Methionine import ATP-binding protein MetN 1 (341 aa).

In terms of domain architecture, ABC transporter spans 2–241 (IEFRQVSKSF…PKTTIAQNFV (240 aa)). An ATP-binding site is contributed by 38 to 45 (GYSGAGKS).

This sequence belongs to the ABC transporter superfamily. Methionine importer (TC 3.A.1.24) family. The complex is composed of two ATP-binding proteins (MetN), two transmembrane proteins (MetI) and a solute-binding protein (MetQ).

The protein localises to the cell membrane. It carries out the reaction L-methionine(out) + ATP + H2O = L-methionine(in) + ADP + phosphate + H(+). The catalysed reaction is D-methionine(out) + ATP + H2O = D-methionine(in) + ADP + phosphate + H(+). In terms of biological role, part of the ABC transporter complex MetNIQ involved in methionine import. Responsible for energy coupling to the transport system. This Staphylococcus aureus (strain MRSA252) protein is Methionine import ATP-binding protein MetN 1.